The primary structure comprises 157 residues: 6,7-dimethyl-8-ribityllumazine synthase (157 aa).

Residues Phe24, 58-60 (SFE), and 82-84 (AVI) each bind 5-amino-6-(D-ribitylamino)uracil. 87 to 88 (ET) lines the (2S)-2-hydroxy-3-oxobutyl phosphate pocket. Catalysis depends on His90, which acts as the Proton donor. Phe115 serves as a coordination point for 5-amino-6-(D-ribitylamino)uracil. Residue Arg129 participates in (2S)-2-hydroxy-3-oxobutyl phosphate binding.

The protein belongs to the DMRL synthase family.

The catalysed reaction is (2S)-2-hydroxy-3-oxobutyl phosphate + 5-amino-6-(D-ribitylamino)uracil = 6,7-dimethyl-8-(1-D-ribityl)lumazine + phosphate + 2 H2O + H(+). Its pathway is cofactor biosynthesis; riboflavin biosynthesis; riboflavin from 2-hydroxy-3-oxobutyl phosphate and 5-amino-6-(D-ribitylamino)uracil: step 1/2. Its function is as follows. Catalyzes the formation of 6,7-dimethyl-8-ribityllumazine by condensation of 5-amino-6-(D-ribitylamino)uracil with 3,4-dihydroxy-2-butanone 4-phosphate. This is the penultimate step in the biosynthesis of riboflavin. The polypeptide is 6,7-dimethyl-8-ribityllumazine synthase (Thermus thermophilus (strain ATCC BAA-163 / DSM 7039 / HB27)).